Consider the following 359-residue polypeptide: Protein mab-21-like 2 (359 aa).

It belongs to the mab-21 family.

The protein resides in the nucleus. Its subcellular location is the cytoplasm. In terms of biological role, required for eye morphogenesis. May promote the survival of proliferating retinal progenitor cells. The polypeptide is Protein mab-21-like 2 (mab21l2) (Danio rerio (Zebrafish)).